We begin with the raw amino-acid sequence, 73 residues long: Mu-conotoxin PIIIA (73 aa).

The N-terminal stretch at 1–19 is a signal peptide; sequence MSKLGVLLTICLLLFPITA. Residues 20–49 constitute a propeptide that is removed on maturation; sequence LPMDGDQPADRLAERMQDNISSEEHPFEKR. At glutamine 50 the chain carries Pyrrolidone carboxylic acid. 6 disulfides stabilise this stretch: cysteine 53/cysteine 65, cysteine 53/cysteine 70, cysteine 54/cysteine 70, cysteine 54/cysteine 71, cysteine 60/cysteine 65, and cysteine 60/cysteine 71. At proline 57 the chain carries 4-hydroxyproline. Residue proline 67 is modified to 4-hydroxyproline. Cysteine 71 carries the post-translational modification Cysteine amide.

It belongs to the conotoxin M superfamily. Post-translationally, 3D-structure of 3 disulfide-bond connectivities isomers is described (PIIIA-1 (C1-C5, C2-C6, C3-C4), PIIIA-2 (C1-C4, C2-C5, C3-C6) and PIIIA-3 (C1-C2, C3-C4, C5-C6)). Only PIIIA-2 contains the cysteine connectivity described as typical for native mu-conotoxins. However, PIIIA-1 is more potent than PIIIA-2, suggesting another possible disulfid connectivity. For this reason, both connectivities have been indicated in features. As to expression, expressed by the venom duct.

It is found in the secreted. Functionally, mu-conotoxins block voltage-gated sodium channels (Nav). This toxin potently blocks rNav1.4/SCN4A (IC(50)=36-41 nM). It also moderately blocks rNav1.1/SCN1A (IC(50)=120 nM), rNav1.2/SCN2A (IC(50)=620 nM), rNav1.3/SCN3A (IC(50)=3.2 uM), mNav1.6/SCN8A (IC(50)=100 nM). This inhibition is reversible. The block of Nav1.1, Nav1.2, and Nav1.6 is modified when beta-subunits are coexpressed with alpha subunits. Hence, blocks of channels containing the beta-1 and beta-3 subunits are more potent (compared to channels without beta subunits), whereas blocks of channels containing the beta-2 and beta-4 are less potent (compared to channels without beta subunits). In vivo, this peptide causes flaccid paralysis in both mice and fish. This Conus purpurascens (Purple cone) protein is Mu-conotoxin PIIIA.